A 236-amino-acid polypeptide reads, in one-letter code: CD81 antigen (236 aa).

The Cytoplasmic portion of the chain corresponds to Met-1–Tyr-12. Residues Leu-13–Leu-33 form a helical membrane-spanning segment. The Extracellular portion of the chain corresponds to Trp-34–Tyr-63. A helical membrane pass occupies residues Ile-64–Ile-84. Topologically, residues Gln-85–Cys-89 are cytoplasmic. Residues Leu-90 to Gly-112 traverse the membrane as a helical segment. Topologically, residues Phe-113 to Lys-201 are extracellular. 2 disulfide bridges follow: Cys-156–Cys-190 and Cys-157–Cys-175. Residues Leu-202 to Met-224 form a helical membrane-spanning segment. Glu-219 contributes to the cholesterol binding site. Residues Val-225–Tyr-236 lie on the Cytoplasmic side of the membrane.

This sequence belongs to the tetraspanin (TM4SF) family. Homodimer. Part of a complex composed of CD19, CR2/CD21, CD81 and IFITM1/CD225 in the membrane of mature B cells. Interacts (via the second extracellular domain) with CD19; this interaction is initiated early during biosynthesis in the ER and enables trafficking of only properly folded CD19. Part of a complex that includes MHC class II/HLA-DR molecules and IFITM1. Interacts with IFITM1. Interacts with IFITM2 and IFITM3. Part of integrin-tetraspanin complex composed of CD9, CD81, beta-1 and beta-2 integrins in the membrane of monocyte/macrophages. Interacts (via the second extracellular domain) with integrin ITGAV:ITGB3. Interacts with CD247/CD3 zeta, ICAM1 and CD9 at the immune synapse on T cell membrane. Part of a GPCR-tetraspanin complex consisting at least of ADGRG1, CD81, possibly CD9, and GNA11 in which CD81 enhances the association of ADGRG1 with GNA11. Part of a complex composed of CD9, CD81, PTGFRN and IGSF8. Interacts directly with IGSF8. Interacts with CD53 and SCIMP. Interacts with SAMHD1 (via its C-terminus). Interacts with glypican GPC3 and with the transcriptional repressor HHEX; binding to GPC3 decreases the availability of free CD81 for binding to HHEX, resulting in nuclear translocation of HHEX and transcriptional repression. Interacts with CLDN1. Interacts with CLDN6 and CLDN9. Not glycosylated. In terms of processing, likely constitutively palmitoylated at low levels. Protein palmitoylation is up-regulated upon coligation of BCR and CD9-C2R-CD81 complexes in lipid rafts.

The protein localises to the cell membrane. It localises to the basolateral cell membrane. Structural component of specialized membrane microdomains known as tetraspanin-enriched microdomains (TERMs), which act as platforms for receptor clustering and signaling. Essential for trafficking and compartmentalization of CD19 receptor on the surface of activated B cells. Upon initial encounter with microbial pathogens, enables the assembly of CD19-CR2/CD21 and B cell receptor (BCR) complexes at signaling TERMs, lowering the threshold dose of antigen required to trigger B cell clonal expansion and antibody production. In T cells, facilitates the localization of CD247/CD3 zeta at antigen-induced synapses with B cells, providing for costimulation and polarization toward T helper type 2 phenotype. Present in MHC class II compartments, may also play a role in antigen presentation. Can act both as positive and negative regulator of homotypic or heterotypic cell-cell fusion processes. Positively regulates sperm-egg fusion and may be involved in acrosome reaction. In myoblasts, associates with CD9 and PTGFRN and inhibits myotube fusion during muscle regeneration. In macrophages, associates with CD9 and beta-1 and beta-2 integrins, and prevents macrophage fusion into multinucleated giant cells specialized in ingesting complement-opsonized large particles. Also prevents the fusion of mononuclear cell progenitors into osteoclasts in charge of bone resorption. May regulate the compartmentalization of enzymatic activities. In T cells, defines the subcellular localization of dNTPase SAMHD1 and permits its degradation by the proteasome, thereby controlling intracellular dNTP levels. Also involved in cell adhesion and motility. Positively regulates integrin-mediated adhesion of macrophages, particularly relevant for the inflammatory response in the lung. The chain is CD81 antigen (CD81) from Chlorocebus aethiops (Green monkey).